A 200-amino-acid polypeptide reads, in one-letter code: UPF0301 protein Veis_1517 (200 aa).

Belongs to the UPF0301 (AlgH) family.

The sequence is that of UPF0301 protein Veis_1517 from Verminephrobacter eiseniae (strain EF01-2).